A 447-amino-acid polypeptide reads, in one-letter code: N-succinylarginine dihydrolase (447 aa).

Substrate-binding positions include 19–28, Asn110, and 137–138; these read AGLSFGNEAS and HR. The active site involves Glu174. Residue Arg212 participates in substrate binding. Residue His248 is part of the active site. Substrate-binding residues include Asp250 and Asn359. Catalysis depends on Cys365, which acts as the Nucleophile.

The protein belongs to the succinylarginine dihydrolase family. As to quaternary structure, homodimer.

The catalysed reaction is N(2)-succinyl-L-arginine + 2 H2O + 2 H(+) = N(2)-succinyl-L-ornithine + 2 NH4(+) + CO2. It participates in amino-acid degradation; L-arginine degradation via AST pathway; L-glutamate and succinate from L-arginine: step 2/5. Catalyzes the hydrolysis of N(2)-succinylarginine into N(2)-succinylornithine, ammonia and CO(2). The protein is N-succinylarginine dihydrolase of Escherichia coli O9:H4 (strain HS).